We begin with the raw amino-acid sequence, 894 residues long: Glutamate receptor 3 (894 aa).

The N-terminal stretch at 1 to 28 (MARQKKMGQSVLRAVFFLVLGLLGHSHG) is a signal peptide. Over 29 to 552 (GFPNTISIGG…GVFSFLDPLA (524 aa)) the chain is Extracellular. N-linked (GlcNAc...) asparagine glycosylation is found at N63, N266, N380, N415, and N422. Residues C91 and C340 are joined by a disulfide bond. 3 residues coordinate L-glutamate: P508, T510, and R515. Residues 553 to 573 (YEIWMCIVFAYIGVSVVLFLV) form a helical membrane-spanning segment. The Cytoplasmic segment spans residues 574-602 (SRFSPYEWHLEDNNEEPRDPQSPPDPPNE). Residues 603–618 (FGIFNSLWFSLGAFMQ) constitute an intramembrane region (helical; Pore-forming). The stretch at 619 to 621 (QGC) is an intramembrane region. Residue C621 is the site of S-palmitoyl cysteine attachment. The Cytoplasmic segment spans residues 622 to 627 (DISPRS). The chain crosses the membrane as a helical span at residues 628 to 648 (LSGRIVGGVWWFFTLIIISSY). At 649–823 (TANLAAFLTV…DKTSALSLSN (175 aa)) the chain is on the extracellular side. 3 residues coordinate L-glutamate: S686, T687, and E737. A disulfide bridge links C750 with C805. The chain crosses the membrane as a helical span at residues 824-844 (VAGVFYILVGGLGLAMMVALI). The Cytoplasmic segment spans residues 845–894 (EFCYKSRAESKRMKLTKNTQNFKPAPATNTQNYATYREGYNVYGTESVKI). C847 carries S-palmitoyl cysteine lipidation. Y877 and Y887 each carry phosphotyrosine.

The protein belongs to the glutamate-gated ion channel (TC 1.A.10.1) family. GRIA3 subfamily. Homotetramer or heterotetramer of pore-forming glutamate receptor subunits. Tetramers may be formed by the dimerization of dimers. Interacts with PICK1, GRIP1 and GRIP2. Found in a complex with GRIA1, GRIA2, GRIA4, CNIH2, CNIH3, CACNG2, CACNG3, CACNG4, CACNG5, CACNG7 and CACNG8. Interacts with CACNG5. Found in a complex with GRIA1, GRIA2, GRIA4, DLG4, CACNG8 and CNIH2.

It is found in the cell membrane. The protein localises to the postsynaptic cell membrane. Its subcellular location is the postsynaptic density membrane. It carries out the reaction Ca(2+)(in) = Ca(2+)(out). Functionally, ionotropic glutamate receptor that functions as a ligand-gated cation channel, gated by L-glutamate and glutamatergic agonists such as alpha-amino-3-hydroxy-5-methyl-4-isoxazolepropionic acid (AMPA), quisqualic acid, and kainic acid. L-glutamate acts as an excitatory neurotransmitter at many synapses in the central nervous system and plays an important role in fast excitatory synaptic transmission by inducing long-term potentiation. Binding of the excitatory neurotransmitter L-glutamate induces a conformation change, leading to the opening of the cation channel, and thereby converts the chemical signal to an electrical impulse upon entry of calcium. The receptor then desensitizes rapidly and enters a transient inactive state, characterized by the presence of bound agonist. In the presence of CACNG8, shows resensitization which is characterized by a delayed accumulation of current flux upon continued application of glutamate. This is Glutamate receptor 3 from Homo sapiens (Human).